The following is a 552-amino-acid chain: Putative transport protein APL_0966 (552 aa).

The next 5 membrane-spanning stretches (helical) occupy residues 4 to 24 (IAII…IGHI), 29 to 49 (VGLG…CTHL), 65 to 85 (FGLI…FFAS), 95 to 115 (GFAV…HKLF), and 161 to 181 (IAYP…RIIF). RCK C-terminal domains are found at residues 190-275 (QEFD…ILGE) and 277-360 (ADVS…IIGD). The next 6 helical transmembrane spans lie at 370–390 (MLPI…PLYI), 402–424 (AGGP…LYWF), 438–458 (IVLF…DTLL), 463–483 (LAWM…TGFV), 492–512 (YLSL…LAFA), and 529–549 (VYPL…ILLW).

The protein belongs to the AAE transporter (TC 2.A.81) family. YidE subfamily.

It is found in the cell membrane. This is Putative transport protein APL_0966 from Actinobacillus pleuropneumoniae serotype 5b (strain L20).